We begin with the raw amino-acid sequence, 488 residues long: Multidrug resistance outer membrane protein MdtP (488 aa).

The first 23 residues, 1–23 (MINRQLSRLLLCSILGSTTLISG), serve as a signal peptide directing secretion. The N-palmitoyl cysteine moiety is linked to residue C24. A lipid anchor (S-diacylglycerol cysteine) is attached at C24.

It belongs to the outer membrane factor (OMF) (TC 1.B.17) family. In terms of assembly, could be part of a tripartite efflux system composed of MdtN, MdtO and MdtP.

Its subcellular location is the cell outer membrane. Could be involved in resistance to puromycin, acriflavine and tetraphenylarsonium chloride. This chain is Multidrug resistance outer membrane protein MdtP (mdtP), found in Escherichia coli O6:H1 (strain CFT073 / ATCC 700928 / UPEC).